The chain runs to 113 residues: T cell receptor alpha variable 8-6 (113 aa).

An N-terminal signal peptide occupies residues 1–20 (MLLLLVPAFQVIFTLGGTRA). One can recognise an Ig-like domain in the interval 21-113 (QSVTQLDSQV…DTAEYFCAVS (93 aa)). Cysteines 42 and 110 form a disulfide. Asn-43 and Asn-87 each carry an N-linked (GlcNAc...) asparagine glycan.

In terms of assembly, alpha-beta TR is a heterodimer composed of an alpha and beta chain; disulfide-linked. The alpha-beta TR is associated with the transmembrane signaling CD3 coreceptor proteins to form the TR-CD3 (TcR or TCR). The assembly of alpha-beta TR heterodimers with CD3 occurs in the endoplasmic reticulum where a single alpha-beta TR heterodimer associates with one CD3D-CD3E heterodimer, one CD3G-CD3E heterodimer and one CD247 homodimer forming a stable octameric structure. CD3D-CD3E and CD3G-CD3E heterodimers preferentially associate with TR alpha and TR beta chains, respectively. The association of the CD247 homodimer is the last step of TcR assembly in the endoplasmic reticulum and is required for transport to the cell surface.

Its subcellular location is the cell membrane. V region of the variable domain of T cell receptor (TR) alpha chain that participates in the antigen recognition. Alpha-beta T cell receptors are antigen specific receptors which are essential to the immune response and are present on the cell surface of T lymphocytes. Recognize peptide-major histocompatibility (MH) (pMH) complexes that are displayed by antigen presenting cells (APC), a prerequisite for efficient T cell adaptive immunity against pathogens. Binding of alpha-beta TR to pMH complex initiates TR-CD3 clustering on the cell surface and intracellular activation of LCK that phosphorylates the ITAM motifs of CD3G, CD3D, CD3E and CD247 enabling the recruitment of ZAP70. In turn ZAP70 phosphorylates LAT, which recruits numerous signaling molecules to form the LAT signalosome. The LAT signalosome propagates signal branching to three major signaling pathways, the calcium, the mitogen-activated protein kinase (MAPK) kinase and the nuclear factor NF-kappa-B (NF-kB) pathways, leading to the mobilization of transcription factors that are critical for gene expression and essential for T cell growth and differentiation. The T cell repertoire is generated in the thymus, by V-(D)-J rearrangement. This repertoire is then shaped by intrathymic selection events to generate a peripheral T cell pool of self-MH restricted, non-autoaggressive T cells. Post-thymic interaction of alpha-beta TR with the pMH complexes shapes TR structural and functional avidity. In Homo sapiens (Human), this protein is T cell receptor alpha variable 8-6.